Consider the following 310-residue polypeptide: S-adenosylmethionine-dependent nucleotide dehydratase (310 aa).

Residues 3 to 221 (PAIPPTINLH…VERHRKVESS (219 aa)) enclose the Radical SAM core domain. 3 residues coordinate [4Fe-4S] cluster: Cys17, Cys21, and Cys24.

Belongs to the radical SAM superfamily. Viperin family. [4Fe-4S] cluster serves as cofactor.

The catalysed reaction is GTP + AH2 + S-adenosyl-L-methionine = 3'-deoxy-3',4'-didehydro-GTP + 5'-deoxyadenosine + L-methionine + A + H2O + H(+). Its function is as follows. Expression of pVip15 in E.coli (strain MG1655) confers resistance to phage T7; prevents culture collapse upon infection. Catalyzes the conversion of guanosine triphosphate (GTP) to 3'-deoxy-3',4'-didehydro-GTP (ddhGTP), probably via a SAM-dependent radical mechanism. The modified nucleotide represses transcription from T7 RNA polymerase-directed genes (possibly by acting as chain terminators), strongly suggesting these nucleotides block viral polymerase transcription. This chain is S-adenosylmethionine-dependent nucleotide dehydratase, found in Coraliomargarita akajimensis (strain DSM 45221 / IAM 15411 / JCM 23193 / KCTC 12865 / 04OKA010-24).